The sequence spans 71 residues: Equinin B (71 aa).

An N-terminal signal peptide occupies residues 1–11; that stretch reads MAVIMVDQAEG. A propeptide spanning residues 46–71 is cleaved from the precursor; sequence GDEPQQMALDDESDPLVILPNNYNDY.

Contains 4 disulfide bonds.

Its subcellular location is the secreted. The protein resides in the target cell membrane. Its function is as follows. Antimicrobial peptide with inhibitory activity against both Gram-positive and Gram-negative bacteria (E.coli (MIC=0.25 ug/ml), M.lysodeikticus (MIC=0.25 ug/ml), and V.alginolyticus (MIC=0.25 ug/ml)). Does not show hemolytic activity. In Actinia equina (Beadlet anemone), this protein is Equinin B.